An 809-amino-acid polypeptide reads, in one-letter code: Mediator of RNA polymerase II transcription subunit 15 (809 aa).

Disordered stretches follow at residues 115 to 137 (AMQGVAGGQQGAGAAGPMQQMIQ), 183 to 211 (QLQQHHQNQQMQHQNQQQQQAQNQQQQNQ), and 413 to 549 (GQMM…ASQS). Gly residues predominate over residues 119–128 (VAGGQQGAGA). Low complexity predominate over residues 446 to 467 (QQMPQAQQMMSSPSPVQVQTPQ). A compositionally biased stretch (pro residues) spans 468 to 484 (SMPPPPQPQPSPQPPSS). Low complexity-rich tracts occupy residues 485 to 502 (QPNSVSSGPTPSPGGFQP) and 510 to 520 (QSPASSRTPQS). The span at 533–549 (TPGNPSSVMSPAGASQS) shows a compositional bias: polar residues.

The protein belongs to the Mediator complex subunit 15 family. In terms of assembly, component of the Mediator complex. Interacts with srebf1 and srebf2. Interacts with smad2, smad3 and smad4.

It localises to the cytoplasm. The protein resides in the nucleus. In terms of biological role, component of the Mediator complex, a coactivator involved in the regulated transcription of nearly all RNA polymerase II-dependent genes. Mediator functions as a bridge to convey information from gene-specific regulatory proteins to the basal RNA polymerase II transcription machinery. Mediator is recruited to promoters by direct interactions with regulatory proteins and serves as a scaffold for the assembly of a functional preinitiation complex with RNA polymerase II and the general transcription factors. Required for cholesterol-dependent gene regulation. Positively regulates the Nodal signaling pathway. This is Mediator of RNA polymerase II transcription subunit 15 (med15) from Danio rerio (Zebrafish).